Here is a 384-residue protein sequence, read N- to C-terminus: Putative pectate lyase 2 (384 aa).

The N-terminal stretch at 1–23 (MASLFLTIISLLFAAFSSSVVEA) is a signal peptide. Ca(2+) contacts are provided by Asp182, Asp206, and Asp210. Residue Arg262 is part of the active site.

This sequence belongs to the polysaccharide lyase 1 family. It depends on Ca(2+) as a cofactor.

The catalysed reaction is Eliminative cleavage of (1-&gt;4)-alpha-D-galacturonan to give oligosaccharides with 4-deoxy-alpha-D-galact-4-enuronosyl groups at their non-reducing ends.. It participates in glycan metabolism; pectin degradation; 2-dehydro-3-deoxy-D-gluconate from pectin: step 2/5. The chain is Putative pectate lyase 2 from Arabidopsis thaliana (Mouse-ear cress).